A 274-amino-acid polypeptide reads, in one-letter code: 2,3,4,5-tetrahydropyridine-2,6-dicarboxylate N-succinyltransferase (274 aa).

Belongs to the transferase hexapeptide repeat family.

It localises to the cytoplasm. The catalysed reaction is (S)-2,3,4,5-tetrahydrodipicolinate + succinyl-CoA + H2O = (S)-2-succinylamino-6-oxoheptanedioate + CoA. Its pathway is amino-acid biosynthesis; L-lysine biosynthesis via DAP pathway; LL-2,6-diaminopimelate from (S)-tetrahydrodipicolinate (succinylase route): step 1/3. The chain is 2,3,4,5-tetrahydropyridine-2,6-dicarboxylate N-succinyltransferase from Leptothrix cholodnii (strain ATCC 51168 / LMG 8142 / SP-6) (Leptothrix discophora (strain SP-6)).